Consider the following 537-residue polypeptide: ATP synthase subunit beta (537 aa).

The tract at residues 1-61 is disordered; it reads MAKAATSKKE…SSPQKGGKKG (61 aa). Over residues 7–18 the composition is skewed to basic and acidic residues; the sequence is SKKEASKVEAKK. The segment covering 44–55 has biased composition (polar residues); that stretch reads NSPSRTGSSSPQ. 209–216 contacts ATP; sequence GGAGVGKT.

The protein belongs to the ATPase alpha/beta chains family. As to quaternary structure, F-type ATPases have 2 components, CF(1) - the catalytic core - and CF(0) - the membrane proton channel. CF(1) has five subunits: alpha(3), beta(3), gamma(1), delta(1), epsilon(1). CF(0) has three main subunits: a(1), b(2) and c(9-12). The alpha and beta chains form an alternating ring which encloses part of the gamma chain. CF(1) is attached to CF(0) by a central stalk formed by the gamma and epsilon chains, while a peripheral stalk is formed by the delta and b chains.

It localises to the cell inner membrane. It carries out the reaction ATP + H2O + 4 H(+)(in) = ADP + phosphate + 5 H(+)(out). In terms of biological role, produces ATP from ADP in the presence of a proton gradient across the membrane. The catalytic sites are hosted primarily by the beta subunits. The chain is ATP synthase subunit beta from Bartonella bacilliformis (strain ATCC 35685 / KC583 / Herrer 020/F12,63).